Reading from the N-terminus, the 119-residue chain is ATP-dependent Clp protease adapter protein ClpS (119 aa).

Residues 1–29 (MICPPGENKSMAERKQGGQGNGVGSSVVT) are disordered.

It belongs to the ClpS family. Binds to the N-terminal domain of the chaperone ClpA.

Involved in the modulation of the specificity of the ClpAP-mediated ATP-dependent protein degradation. The sequence is that of ATP-dependent Clp protease adapter protein ClpS from Caulobacter vibrioides (strain ATCC 19089 / CIP 103742 / CB 15) (Caulobacter crescentus).